Here is a 200-residue protein sequence, read N- to C-terminus: Protein Mbur_1344 (200 aa).

One can recognise an AMMECR1 domain in the interval 5–192; that stretch reads SEGEQTVRLA…EVEPRGDIEE (188 aa).

This is Protein Mbur_1344 from Methanococcoides burtonii (strain DSM 6242 / NBRC 107633 / OCM 468 / ACE-M).